A 249-amino-acid chain; its full sequence is NH(3)-dependent NAD(+) synthetase (249 aa).

Residue 29 to 36 (GVSGGVDS) coordinates ATP. Position 35 (D35) interacts with Mg(2+). R116 contributes to the deamido-NAD(+) binding site. Position 136 (T136) interacts with ATP. E141 provides a ligand contact to Mg(2+). The deamido-NAD(+) site is built by K149 and D156. The ATP site is built by K165 and S187. 233–234 (HK) lines the deamido-NAD(+) pocket.

This sequence belongs to the NAD synthetase family. As to quaternary structure, homodimer.

The enzyme catalyses deamido-NAD(+) + NH4(+) + ATP = AMP + diphosphate + NAD(+) + H(+). It functions in the pathway cofactor biosynthesis; NAD(+) biosynthesis; NAD(+) from deamido-NAD(+) (ammonia route): step 1/1. Catalyzes the ATP-dependent amidation of deamido-NAD to form NAD. Uses ammonia as a nitrogen source. This is NH(3)-dependent NAD(+) synthetase from Syntrophomonas wolfei subsp. wolfei (strain DSM 2245B / Goettingen).